We begin with the raw amino-acid sequence, 470 residues long: Tubulin gamma chain (470 aa).

144-150 (AGGTGSG) serves as a coordination point for GTP.

Belongs to the tubulin family.

The protein localises to the cytoplasm. Its subcellular location is the cytoskeleton. It is found in the microtubule organizing center. The protein resides in the spindle pole body. Tubulin is the major constituent of microtubules. The gamma chain is found at microtubule organizing centers (MTOC) such as the spindle poles or the centrosome, suggesting that it is involved in the minus-end nucleation of microtubule assembly. This chain is Tubulin gamma chain (TUB4), found in Eremothecium gossypii (strain ATCC 10895 / CBS 109.51 / FGSC 9923 / NRRL Y-1056) (Yeast).